We begin with the raw amino-acid sequence, 343 residues long: N-acetyl-gamma-glutamyl-phosphate reductase (343 aa).

Cys-147 is an active-site residue.

Belongs to the NAGSA dehydrogenase family. Type 1 subfamily.

It is found in the cytoplasm. The catalysed reaction is N-acetyl-L-glutamate 5-semialdehyde + phosphate + NADP(+) = N-acetyl-L-glutamyl 5-phosphate + NADPH + H(+). It participates in amino-acid biosynthesis; L-arginine biosynthesis; N(2)-acetyl-L-ornithine from L-glutamate: step 3/4. Functionally, catalyzes the NADPH-dependent reduction of N-acetyl-5-glutamyl phosphate to yield N-acetyl-L-glutamate 5-semialdehyde. This chain is N-acetyl-gamma-glutamyl-phosphate reductase, found in Staphylococcus saprophyticus subsp. saprophyticus (strain ATCC 15305 / DSM 20229 / NCIMB 8711 / NCTC 7292 / S-41).